Here is a 208-residue protein sequence, read N- to C-terminus: Uracil phosphoribosyltransferase (208 aa).

5-phospho-alpha-D-ribose 1-diphosphate contacts are provided by residues R78, R103, and 130–138 (DPMLATGGS). Residues I193 and 198 to 200 (GDA) contribute to the uracil site. 5-phospho-alpha-D-ribose 1-diphosphate is bound at residue D199.

This sequence belongs to the UPRTase family. The cofactor is Mg(2+).

It catalyses the reaction UMP + diphosphate = 5-phospho-alpha-D-ribose 1-diphosphate + uracil. It participates in pyrimidine metabolism; UMP biosynthesis via salvage pathway; UMP from uracil: step 1/1. Allosterically activated by GTP. In terms of biological role, catalyzes the conversion of uracil and 5-phospho-alpha-D-ribose 1-diphosphate (PRPP) to UMP and diphosphate. This chain is Uracil phosphoribosyltransferase, found in Shewanella amazonensis (strain ATCC BAA-1098 / SB2B).